Reading from the N-terminus, the 357-residue chain is Guanine nucleotide-binding protein alpha-1 subunit (357 aa).

The N-myristoyl glycine moiety is linked to residue Gly-2. A lipid anchor (S-palmitoyl cysteine) is attached at Cys-4. One can recognise a G-alpha domain in the interval 32 to 357 (NVIKLLLLGA…SSKLKGCGLF (326 aa)). The tract at residues 35-48 (KLLLLGAGESGKST) is G1 motif. GTP-binding residues include Glu-43, Ser-44, Gly-45, Lys-46, Ser-47, Thr-48, Asp-151, Leu-176, Thr-182, Gly-204, Asn-270, Lys-271, Asp-273, and Ala-329. Ser-47 contributes to the Mg(2+) binding site. Residues 174 to 182 (DILHTRVPT) are G2 motif. Position 182 (Thr-182) interacts with Mg(2+). Residues 197–206 (FRVFDVGGQR) are G3 motif. The G4 motif stretch occupies residues 266-273 (ILFLNKVD). The G5 motif stretch occupies residues 327–332 (TCATDT).

This sequence belongs to the G-alpha family. G(q) subfamily. G proteins are composed of 3 units; alpha, beta and gamma. The alpha chain contains the guanine nucleotide binding site. Requires Mg(2+) as cofactor.

Its function is as follows. Guanine nucleotide-binding proteins (G proteins) are involved as modulators or transducers in various transmembrane signaling systems. The protein is Guanine nucleotide-binding protein alpha-1 subunit (gpa-1) of Caenorhabditis briggsae.